The following is a 574-amino-acid chain: Optineurin (574 aa).

The segment at 1–33 (MSHQPLSCLTEKGDSPTETTGNGPPTLAHPNLD) is disordered. Positions 38-170 (HELLQQMREL…VSELQLKLNS (133 aa)) form a coiled coil. An interaction with Rab8 region spans residues 58–209 (MKLNNQAMKG…GPIRTDSIDT (152 aa)). An LIR motif is present at residues 176–181 (DSFVEI). Phosphoserine; by TBK1 is present on Ser177. At Ser198 the chain carries Phosphoserine. Positions 233–496 (CLREGNQKVE…ALQLAVLLKD (264 aa)) form a coiled coil. Basic and acidic residues predominate over residues 262-286 (AKDRSETETQTEEHKEQEKEEEKSP). The disordered stretch occupies residues 262 to 292 (AKDRSETETQTEEHKEQEKEEEKSPETVGSE). Ser336 is subject to Phosphoserine. The tract at residues 405-574 (KRRESEKVDK…LLIHVTDCII (170 aa)) is interaction with HD. The interval 406–515 (RRESEKVDKV…RQSLMEMQSR (110 aa)) is interaction with MYO6. A UBAN motif is present at residues 468 to 473 (DFHAER). Ser521 is modified (phosphoserine). The CCHC NOA-type zinc-finger motif lies at 544-574 (QQNIPIHSCPKCGEVLPDIDTLLIHVTDCII). The Zn(2+) site is built by Cys552, Cys555, His568, and Cys572.

Self-associates. Interacts with HD. Interacts with GTF3A. Interacts with MYO6. Interacts (via UBAN) with ubiquitinated TFRC. Interacts with GTP-bound Rab8 (RAB8A and/or RAB8B). Interacts with TBC1D17. Interacts with TBK1. Interacts with TRAF3. Binds to linear ubiquitin chains. Interacts with LC3 family members MAP1LC3A, MAP1LC3B, GABARAP, GABARAPL1 and GABARAPL2; OPTN phosphorylation increases the association (at least with MAP1LC3B). Interacts with RAB12; the interaction may be indirect. Interacts with TBK1; this interaction leads to the Golgi localization of TBK1 and its subsequent activation. Interacts with palmitoyltransferase ZDHHC17/HIP14; the interaction does not lead to palmitoylation of OPTN. Interacts with CYLD. Interacts with TOM1; the interaction is indirect and is mediated by MYO6, which acts as a bridge between TOM1 and OPTN. Interacts with USP12; the interaction is independent of USP12 deubiquitinase activity and may be involved in regulation of autophagic flux. Post-translationally, phosphorylated by TBK1, leading to restrict bacterial proliferation in case of infection. In terms of tissue distribution, present in aqueous humor of the eye (at protein level). Expressed in trabecular meshwork and astrocytes.

Its subcellular location is the cytoplasm. It is found in the perinuclear region. The protein localises to the golgi apparatus. It localises to the trans-Golgi network. The protein resides in the cytoplasmic vesicle. Its subcellular location is the autophagosome. It is found in the recycling endosome. Its function is as follows. Plays an important role in the maintenance of the Golgi complex, in membrane trafficking, in exocytosis, through its interaction with myosin VI and Rab8. Links myosin VI to the Golgi complex and plays an important role in Golgi ribbon formation. Negatively regulates the induction of IFNB in response to RNA virus infection. Plays a neuroprotective role in the eye and optic nerve. Probably part of the TNF-alpha signaling pathway that can shift the equilibrium toward induction of cell death. May act by regulating membrane trafficking and cellular morphogenesis via a complex that contains Rab8 and huntingtin (HD). Mediates the interaction of Rab8 with the probable GTPase-activating protein TBC1D17 during Rab8-mediated endocytic trafficking, such as that of transferrin receptor (TFRC/TfR); regulates Rab8 recruitment to tubules emanating from the endocytic recycling compartment. Autophagy receptor that interacts directly with both the cargo to become degraded and an autophagy modifier of the MAP1 LC3 family; targets ubiquitin-coated bacteria (xenophagy) and appears to function in the same pathway as SQSTM1 and CALCOCO2/NDP52. The sequence is that of Optineurin (OPTN) from Sus scrofa (Pig).